Here is a 147-residue protein sequence, read N- to C-terminus: Hemoglobin subunit beta-1 (147 aa).

In terms of domain architecture, Globin spans 3–147; that stretch reads KWSKTELTII…VVSALGKQYH (145 aa). Heme b-binding residues include His64 and His93.

This sequence belongs to the globin family. Hb1 is a heterotetramer of two alpha chains and two beta-1 chains. In terms of tissue distribution, red blood cells.

Functionally, involved in oxygen transport from gills to the various peripheral tissues. This Cygnodraco mawsoni (Antarctic dragonfish) protein is Hemoglobin subunit beta-1 (hbb1).